The sequence spans 237 residues: uncharacterized protein (237 aa).

The segment at 213-237 is disordered; sequence GQGKYLKLDSNTTENKTTKQNETGG. Over residues 223 to 237 the composition is skewed to low complexity; the sequence is NTTENKTTKQNETGG.

This is an uncharacterized protein from Methanothermobacter thermautotrophicus (Methanobacterium thermoformicicum).